The following is a 417-amino-acid chain: Cytochrome b-c1 complex subunit 2, mitochondrial (417 aa).

The transit peptide at 1 to 22 (MTRGVPRLAVAARHFSTAEAAG) directs the protein to the mitochondrion.

Belongs to the peptidase M16 family. UQCRC2/QCR2 subfamily. As to quaternary structure, component of the ubiquinol-cytochrome c oxidoreductase (cytochrome b-c1 complex, complex III, CIII), a multisubunit enzyme composed of 3 respiratory subunits cytochrome b, cytochrome c1 and Rieske protein, 2 core protein subunits, and additional low-molecular weight protein subunits. The complex exists as an obligatory dimer and forms supercomplexes (SCs) in the inner mitochondrial membrane with cytochrome c oxidase (complex IV, CIV).

The protein localises to the mitochondrion inner membrane. Its function is as follows. Component of the ubiquinol-cytochrome c oxidoreductase, a multisubunit transmembrane complex that is part of the mitochondrial electron transport chain which drives oxidative phosphorylation. The respiratory chain contains 3 multisubunit complexes succinate dehydrogenase (complex II, CII), ubiquinol-cytochrome c oxidoreductase (cytochrome b-c1 complex, complex III, CIII) and cytochrome c oxidase (complex IV, CIV), that cooperate to transfer electrons derived from NADH and succinate to molecular oxygen, creating an electrochemical gradient over the inner membrane that drives transmembrane transport and the ATP synthase. The cytochrome b-c1 complex catalyzes electron transfer from ubiquinol to cytochrome c, linking this redox reaction to translocation of protons across the mitochondrial inner membrane, with protons being carried across the membrane as hydrogens on the quinol. In the process called Q cycle, 2 protons are consumed from the matrix, 4 protons are released into the intermembrane space and 2 electrons are passed to cytochrome c. The sequence is that of Cytochrome b-c1 complex subunit 2, mitochondrial (QCR2) from Yarrowia lipolytica (strain CLIB 122 / E 150) (Yeast).